The following is a 148-amino-acid chain: Large ribosomal subunit protein bL9 (148 aa).

The protein belongs to the bacterial ribosomal protein bL9 family.

Binds to the 23S rRNA. In Macrococcus caseolyticus (strain JCSC5402) (Macrococcoides caseolyticum), this protein is Large ribosomal subunit protein bL9.